The primary structure comprises 151 residues: MKITESGFDIQGVLDLLPHRYPFLLIDRVIETNSKDSLHAIKNVTFNEPMFNGHFPAKPIFPGVLLLEAIAQACGLLGFKITESKKNANDLYLFAGIDNARFKRQVIPGDTVDFFVTFEKERRGIWKFTGRAEVDGDVACTAEIICARREV.

Residue His54 is part of the active site.

It belongs to the thioester dehydratase family. FabZ subfamily.

The protein resides in the cytoplasm. It carries out the reaction a (3R)-hydroxyacyl-[ACP] = a (2E)-enoyl-[ACP] + H2O. Its function is as follows. Involved in unsaturated fatty acids biosynthesis. Catalyzes the dehydration of short chain beta-hydroxyacyl-ACPs and long chain saturated and unsaturated beta-hydroxyacyl-ACPs. The polypeptide is 3-hydroxyacyl-[acyl-carrier-protein] dehydratase FabZ (Idiomarina loihiensis (strain ATCC BAA-735 / DSM 15497 / L2-TR)).